The following is a 250-amino-acid chain: Probable transcriptional regulatory protein MAP_1030 (250 aa).

This sequence belongs to the TACO1 family.

It localises to the cytoplasm. The protein is Probable transcriptional regulatory protein MAP_1030 of Mycolicibacterium paratuberculosis (strain ATCC BAA-968 / K-10) (Mycobacterium paratuberculosis).